Reading from the N-terminus, the 180-residue chain is Outer membrane protein YfaZ (180 aa).

A signal peptide spans 1–21; that stretch reads MKKIALAGLAGMLLVSASVNA.

The protein localises to the cell outer membrane. The chain is Outer membrane protein YfaZ (yfaZ) from Escherichia coli (strain K12).